A 160-amino-acid chain; its full sequence is MAEKTYVMTLAEKKQLEAELEEYKLVRRPEVVERIKIARSYGDLSENSEYEAAKDEQAFVEGQIQILETKIRYAEIVDSDAVANDEVAIGKTVVVQEVGTSDKDTYHIVGAAGADIFSGKISNESPIAQALIGKKVGDKVAIESPAGSYSVEILSVEKTS.

Residues 1 to 72 (MAEKTYVMTL…QIQILETKIR (72 aa)) are a coiled coil.

The protein belongs to the GreA/GreB family.

Its function is as follows. Necessary for efficient RNA polymerase transcription elongation past template-encoded arresting sites. The arresting sites in DNA have the property of trapping a certain fraction of elongating RNA polymerases that pass through, resulting in locked ternary complexes. Cleavage of the nascent transcript by cleavage factors such as GreA or GreB allows the resumption of elongation from the new 3'terminus. GreA releases sequences of 2 to 3 nucleotides. The polypeptide is Transcription elongation factor GreA (Streptococcus thermophilus (strain ATCC BAA-491 / LMD-9)).